A 351-amino-acid chain; its full sequence is Prostaglandin reductase 2 (351 aa).

Residue 99-100 (FY) participates in substrate binding. Residues 165–168 (GACG), Lys-192, Tyr-208, Asn-231, 253–259 (CGQISQY), 287–289 (FTV), and Asn-337 each bind NADP(+). 288–290 (TVL) lines the substrate pocket.

Belongs to the NADP-dependent oxidoreductase L4BD family. As to quaternary structure, monomer. As to expression, widely expressed with highest levels in adipose tissues.

It localises to the cytoplasm. It carries out the reaction 13,14-dihydro-15-oxo-prostaglandin E2 + NAD(+) = 15-oxoprostaglandin E2 + NADH + H(+). It catalyses the reaction 13,14-dihydro-15-oxo-prostaglandin E2 + NADP(+) = 15-oxoprostaglandin E2 + NADPH + H(+). The enzyme catalyses 13,14-dihydro-15-oxo-PGF2alpha + NADP(+) = 15-oxoprostaglandin F2alpha + NADPH + H(+). The catalysed reaction is 13,14-dihydro-15-oxo-prostaglandin E1 + NADP(+) = 15-oxoprostaglandin E1 + NADPH + H(+). It carries out the reaction 13,14-dihydro-15-oxo-prostaglandin F1alpha + NADP(+) = 15-oxoprostaglandin F1alpha + NADPH + H(+). Functions as 15-oxo-prostaglandin 13-reductase and acts on 15-keto-PGE1, 15-keto-PGE2, 15-keto-PGE1-alpha and 15-keto-PGE2-alpha with highest activity towards 15-keto-PGE2. Overexpression represses transcriptional activity of PPARG and inhibits adipocyte differentiation. The polypeptide is Prostaglandin reductase 2 (Mus musculus (Mouse)).